We begin with the raw amino-acid sequence, 226 residues long: Lipoprotein-releasing system ATP-binding protein LolD (226 aa).

The 222-residue stretch at 5–226 folds into the ABC transporter domain; the sequence is LKATNINKIY…LLRNGHWENY (222 aa). Residue 41-48 participates in ATP binding; that stretch reads GTSGSGKS.

Belongs to the ABC transporter superfamily. Lipoprotein translocase (TC 3.A.1.125) family. The complex is composed of two ATP-binding proteins (LolD) and two transmembrane proteins (LolC and LolE).

The protein resides in the cell inner membrane. Its function is as follows. Part of the ABC transporter complex LolCDE involved in the translocation of mature outer membrane-directed lipoproteins, from the inner membrane to the periplasmic chaperone, LolA. Responsible for the formation of the LolA-lipoprotein complex in an ATP-dependent manner. This Psychrobacter cryohalolentis (strain ATCC BAA-1226 / DSM 17306 / VKM B-2378 / K5) protein is Lipoprotein-releasing system ATP-binding protein LolD.